Here is a 374-residue protein sequence, read N- to C-terminus: DNA-directed RNA polymerase subunit alpha (374 aa).

Residues 1–270 (MIFDEDSSSV…DQFQQFINFD (270 aa)) are alpha N-terminal domain (alpha-NTD). An alpha C-terminal domain (alpha-CTD) region spans residues 282-374 (KDVLPYDSNL…ESLSKQYSEE (93 aa)).

It belongs to the RNA polymerase alpha chain family. In terms of assembly, homodimer. The RNAP catalytic core consists of 2 alpha, 1 beta, 1 beta' and 1 omega subunit. When a sigma factor is associated with the core the holoenzyme is formed, which can initiate transcription.

The enzyme catalyses RNA(n) + a ribonucleoside 5'-triphosphate = RNA(n+1) + diphosphate. DNA-dependent RNA polymerase catalyzes the transcription of DNA into RNA using the four ribonucleoside triphosphates as substrates. The polypeptide is DNA-directed RNA polymerase subunit alpha (Ehrlichia ruminantium (strain Welgevonden)).